We begin with the raw amino-acid sequence, 127 residues long: Small ribosomal subunit protein uS13 (127 aa).

The segment at 93–127 (RQGLPVRGQRTRTNGRTRRGRRVTVAGKKKAPAKK) is disordered. Residues 101–127 (QRTRTNGRTRRGRRVTVAGKKKAPAKK) show a composition bias toward basic residues.

Belongs to the universal ribosomal protein uS13 family. In terms of assembly, part of the 30S ribosomal subunit. Forms a loose heterodimer with protein S19. Forms two bridges to the 50S subunit in the 70S ribosome.

Located at the top of the head of the 30S subunit, it contacts several helices of the 16S rRNA. In the 70S ribosome it contacts the 23S rRNA (bridge B1a) and protein L5 of the 50S subunit (bridge B1b), connecting the 2 subunits; these bridges are implicated in subunit movement. Contacts the tRNAs in the A and P-sites. This is Small ribosomal subunit protein uS13 from Crocosphaera subtropica (strain ATCC 51142 / BH68) (Cyanothece sp. (strain ATCC 51142)).